The chain runs to 71 residues: Small ribosomal subunit protein bS21 (71 aa).

Residues 49–59 (KAAAVKRAAKK) show a composition bias toward basic residues. Residues 49–71 (KAAAVKRAAKKVSRENARRVRMY) form a disordered region. Basic and acidic residues predominate over residues 60-71 (VSRENARRVRMY).

Belongs to the bacterial ribosomal protein bS21 family.

This chain is Small ribosomal subunit protein bS21, found in Colwellia psychrerythraea (strain 34H / ATCC BAA-681) (Vibrio psychroerythus).